A 609-amino-acid chain; its full sequence is Ataxin-10 homolog (609 aa).

3 disordered regions span residues 265-293 (KSTT…TTTG), 405-426 (KQQE…SKDS), and 461-490 (SDTN…KGFN). A compositionally biased stretch (low complexity) spans 266–292 (STTESTTESTTTESTDSTTDSTTTTTT). Positions 466-479 (SSSSSSSSSSSTTT) are enriched in low complexity. A compositionally biased stretch (polar residues) spans 480–490 (DGETVTSKGFN).

Belongs to the ATXN10 family.

May play a role in the regulation of cytokinesis. This chain is Ataxin-10 homolog (atxn10), found in Dictyostelium discoideum (Social amoeba).